Consider the following 503-residue polypeptide: Glutamate--tRNA ligase (503 aa).

The short motif at 26–36 (PSPTGTPHVGL) is the 'HIGH' region element. The disordered stretch occupies residues 126 to 148 (TPEEVEARHRAAGRDPKLGYDNA). Over residues 130-148 (VEARHRAAGRDPKLGYDNA) the composition is skewed to basic and acidic residues. The short motif at 270–274 (KLSKR) is the 'KMSKS' region element. Lysine 273 is a binding site for ATP.

It belongs to the class-I aminoacyl-tRNA synthetase family. Glutamate--tRNA ligase type 1 subfamily. As to quaternary structure, monomer.

It localises to the cytoplasm. It catalyses the reaction tRNA(Glu) + L-glutamate + ATP = L-glutamyl-tRNA(Glu) + AMP + diphosphate. Functionally, catalyzes the attachment of glutamate to tRNA(Glu) in a two-step reaction: glutamate is first activated by ATP to form Glu-AMP and then transferred to the acceptor end of tRNA(Glu). The chain is Glutamate--tRNA ligase from Saccharopolyspora erythraea (strain ATCC 11635 / DSM 40517 / JCM 4748 / NBRC 13426 / NCIMB 8594 / NRRL 2338).